We begin with the raw amino-acid sequence, 491 residues long: Protein DETOXIFICATION 20 (491 aa).

The next 12 membrane-spanning stretches (helical) occupy residues 37-57 (LWVV…VSMV), 75-95 (ITFT…AGAL), 120-140 (IVLT…GPIL), 156-176 (LALW…CQMF), 185-205 (IISY…WLLV), 214-234 (GAMT…LLYV), 265-285 (GGML…TGNL), 296-316 (AICI…LAAV), 337-357 (LIAV…FLFL), 381-401 (LLAF…VAIG), 413-433 (LACY…VVGL), and 438-458 (VWIG…VMTL).

The protein belongs to the multi antimicrobial extrusion (MATE) (TC 2.A.66.1) family.

Its subcellular location is the membrane. The sequence is that of Protein DETOXIFICATION 20 from Arabidopsis thaliana (Mouse-ear cress).